The sequence spans 126 residues: Holo-[acyl-carrier-protein] synthase (126 aa).

Mg(2+) is bound by residues Asp-9 and Glu-58.

The protein belongs to the P-Pant transferase superfamily. AcpS family. It depends on Mg(2+) as a cofactor.

The protein resides in the cytoplasm. The enzyme catalyses apo-[ACP] + CoA = holo-[ACP] + adenosine 3',5'-bisphosphate + H(+). Its function is as follows. Transfers the 4'-phosphopantetheine moiety from coenzyme A to a Ser of acyl-carrier-protein. In Klebsiella pneumoniae (strain 342), this protein is Holo-[acyl-carrier-protein] synthase.